Here is a 281-residue protein sequence, read N- to C-terminus: Bifunctional protein FolD (281 aa).

Residues 161–163 (GRS), Ser-186, and Ile-227 each bind NADP(+).

This sequence belongs to the tetrahydrofolate dehydrogenase/cyclohydrolase family. Homodimer.

It catalyses the reaction (6R)-5,10-methylene-5,6,7,8-tetrahydrofolate + NADP(+) = (6R)-5,10-methenyltetrahydrofolate + NADPH. The catalysed reaction is (6R)-5,10-methenyltetrahydrofolate + H2O = (6R)-10-formyltetrahydrofolate + H(+). Its pathway is one-carbon metabolism; tetrahydrofolate interconversion. In terms of biological role, catalyzes the oxidation of 5,10-methylenetetrahydrofolate to 5,10-methenyltetrahydrofolate and then the hydrolysis of 5,10-methenyltetrahydrofolate to 10-formyltetrahydrofolate. This is Bifunctional protein FolD from Brachyspira hyodysenteriae (strain ATCC 49526 / WA1).